A 225-amino-acid polypeptide reads, in one-letter code: tRNA (guanine-N(1)-)-methyltransferase (225 aa).

S-adenosyl-L-methionine is bound by residues G112 and 132-137 (IGDYVL).

Belongs to the RNA methyltransferase TrmD family. Homodimer.

It localises to the cytoplasm. It carries out the reaction guanosine(37) in tRNA + S-adenosyl-L-methionine = N(1)-methylguanosine(37) in tRNA + S-adenosyl-L-homocysteine + H(+). Its function is as follows. Specifically methylates guanosine-37 in various tRNAs. The chain is tRNA (guanine-N(1)-)-methyltransferase from Porphyromonas gingivalis (strain ATCC BAA-308 / W83).